Here is a 513-residue protein sequence, read N- to C-terminus: GMP synthase [glutamine-hydrolyzing] (513 aa).

Residues Ser3–Asp200 enclose the Glutamine amidotransferase type-1 domain. The Nucleophile role is filled by Cys80. Residues His174 and Glu176 contribute to the active site. Residues Trp201–Arg388 enclose the GMPS ATP-PPase domain. Ser228 to Thr234 is a binding site for ATP.

In terms of assembly, homodimer.

It catalyses the reaction XMP + L-glutamine + ATP + H2O = GMP + L-glutamate + AMP + diphosphate + 2 H(+). It functions in the pathway purine metabolism; GMP biosynthesis; GMP from XMP (L-Gln route): step 1/1. Catalyzes the synthesis of GMP from XMP. In Pelodictyon phaeoclathratiforme (strain DSM 5477 / BU-1), this protein is GMP synthase [glutamine-hydrolyzing].